The chain runs to 106 residues: DNA-directed RNA polymerase subunit omega (106 aa).

A disordered region spans residues R76–A106. Residues E92–A106 show a composition bias toward basic and acidic residues.

This sequence belongs to the RNA polymerase subunit omega family. As to quaternary structure, the RNAP catalytic core consists of 2 alpha, 1 beta, 1 beta' and 1 omega subunit. When a sigma factor is associated with the core the holoenzyme is formed, which can initiate transcription.

It carries out the reaction RNA(n) + a ribonucleoside 5'-triphosphate = RNA(n+1) + diphosphate. Functionally, promotes RNA polymerase assembly. Latches the N- and C-terminal regions of the beta' subunit thereby facilitating its interaction with the beta and alpha subunits. This chain is DNA-directed RNA polymerase subunit omega, found in Rubrobacter xylanophilus (strain DSM 9941 / JCM 11954 / NBRC 16129 / PRD-1).